A 168-amino-acid chain; its full sequence is uncharacterized protein (168 aa).

A run of 2 helical transmembrane segments spans residues 4 to 24 and 94 to 114; these read IIAL…PEEE and IMVG…GFAW.

The protein to A.aeolicus aq_1446.

It localises to the cell membrane. This is an uncharacterized protein from Aquifex aeolicus (strain VF5).